The primary structure comprises 334 residues: Beta-1,3-N-acetylglucosaminyltransferase radical fringe (334 aa).

Residues Met-1–Arg-6 are Cytoplasmic-facing. The chain crosses the membrane as a helical; Signal-anchor for type II membrane protein span at residues Val-7–Leu-29. The Lumenal portion of the chain corresponds to Pro-30 to Gln-334. Arg-77 contacts substrate. Asn-116 carries N-linked (GlcNAc...) asparagine glycosylation. 2 cysteine pairs are disulfide-bonded: Cys-117–Cys-128 and Cys-146–Cys-210. Asp-150 provides a ligand contact to substrate. Asp-151 serves as a coordination point for Mn(2+). Asp-240 is an active-site residue. A Mn(2+)-binding site is contributed by His-264. Residues Cys-314 and Cys-323 are joined by a disulfide bond.

This sequence belongs to the glycosyltransferase 31 family. Requires Mn(2+) as cofactor. As to expression, most abundantly expressed in adult brain. Expressed in most neurons of the brain but not in glial cells. Also detected to a lower extent in adult lung and kidney.

It localises to the golgi apparatus membrane. It catalyses the reaction 3-O-(alpha-L-fucosyl)-L-threonyl-[EGF-like domain protein] + UDP-N-acetyl-alpha-D-glucosamine = 3-O-(N-acetyl-beta-D-glucosaminyl-(1-&gt;3)-alpha-L-fucosyl)-L-threonyl-[EGF-like domain protein] + UDP + H(+). It carries out the reaction 3-O-(alpha-L-fucosyl)-L-seryl-[EGF-like domain protein] + UDP-N-acetyl-alpha-D-glucosamine = 3-O-(N-acetyl-beta-D-glucosaminyl-(1-&gt;3)-alpha-L-fucosyl)-L-seryl-[EGF-like domain protein] + UDP + H(+). Glycosyltransferase that initiates the elongation of O-linked fucose residues attached to EGF-like repeats in the extracellular domain of Notch molecules. Modulates NOTCH1 activity by modifying O-fucose residues at specific EGF-like domains resulting in enhancement of NOTCH1 activation by DLL1 and JAG1. Inhibits Notch signaling in postmitotic neurons of the brain. It may play a role in adult brain and in neurogenesis. It may play a role in limb development. This Rattus norvegicus (Rat) protein is Beta-1,3-N-acetylglucosaminyltransferase radical fringe.